A 287-amino-acid chain; its full sequence is Undecaprenyl-diphosphatase (287 aa).

The next 7 membrane-spanning stretches (helical) occupy residues 6 to 26 (LHLL…FIPV), 45 to 65 (SGKV…MWIF), 89 to 109 (NLLL…KSIK), 111 to 131 (VFYH…IMLW), 204 to 224 (ATEF…VYDL), 238 to 258 (AIAV…RAVL), and 266 to 286 (YRVF…WIYA).

The protein belongs to the UppP family.

It localises to the cell inner membrane. It carries out the reaction di-trans,octa-cis-undecaprenyl diphosphate + H2O = di-trans,octa-cis-undecaprenyl phosphate + phosphate + H(+). In terms of biological role, catalyzes the dephosphorylation of undecaprenyl diphosphate (UPP). Confers resistance to bacitracin. In Bordetella bronchiseptica (strain ATCC BAA-588 / NCTC 13252 / RB50) (Alcaligenes bronchisepticus), this protein is Undecaprenyl-diphosphatase.